Consider the following 159-residue polypeptide: MFIFNSIADDIFPLISCVGAIHCNILAIRTGNDFAAIKLQVIKLIYLMIWHSLVIISPVVTLAFFPASLKQGSLHFLLIIYFVLLLTPWLEFSKSGTHLPSNTKIIPAWWVSMDAYLNHASICCHQFSCLSAVKLQLSNEELIRDTRWDIQSYTTDFSF.

Transmembrane regions (helical) follow at residues 1 to 21, 45 to 65, and 72 to 92; these read MFIFNSIADDIFPLISCVGAI, IYLMIWHSLVIISPVVTLAFF, and GSLHFLLIIYFVLLLTPWLEF.

The protein belongs to the XK family. Testis specific.

The protein localises to the membrane. The protein is Testis-specific XK-related protein, Y-linked (XKRY) of Homo sapiens (Human).